A 454-amino-acid chain; its full sequence is UDP-N-acetylmuramoylalanine--D-glutamate ligase (454 aa).

Position 114–120 (114–120) interacts with ATP; the sequence is GTNGKTT.

Belongs to the MurCDEF family.

Its subcellular location is the cytoplasm. It carries out the reaction UDP-N-acetyl-alpha-D-muramoyl-L-alanine + D-glutamate + ATP = UDP-N-acetyl-alpha-D-muramoyl-L-alanyl-D-glutamate + ADP + phosphate + H(+). It functions in the pathway cell wall biogenesis; peptidoglycan biosynthesis. Functionally, cell wall formation. Catalyzes the addition of glutamate to the nucleotide precursor UDP-N-acetylmuramoyl-L-alanine (UMA). The sequence is that of UDP-N-acetylmuramoylalanine--D-glutamate ligase from Desulfitobacterium hafniense (strain DSM 10664 / DCB-2).